The chain runs to 194 residues: Large ribosomal subunit protein bL9 (194 aa).

It belongs to the bacterial ribosomal protein bL9 family.

In terms of biological role, binds to the 23S rRNA. The protein is Large ribosomal subunit protein bL9 of Rhodopseudomonas palustris (strain BisA53).